Reading from the N-terminus, the 309-residue chain is Sulfate adenylyltransferase subunit 2 (309 aa).

Belongs to the PAPS reductase family. CysD subfamily. In terms of assembly, heterodimer composed of CysD, the smaller subunit, and CysN.

It catalyses the reaction sulfate + ATP + H(+) = adenosine 5'-phosphosulfate + diphosphate. It participates in sulfur metabolism; hydrogen sulfide biosynthesis; sulfite from sulfate: step 1/3. With CysN forms the ATP sulfurylase (ATPS) that catalyzes the adenylation of sulfate producing adenosine 5'-phosphosulfate (APS) and diphosphate, the first enzymatic step in sulfur assimilation pathway. APS synthesis involves the formation of a high-energy phosphoric-sulfuric acid anhydride bond driven by GTP hydrolysis by CysN coupled to ATP hydrolysis by CysD. In Methylorubrum extorquens (strain CM4 / NCIMB 13688) (Methylobacterium extorquens), this protein is Sulfate adenylyltransferase subunit 2.